A 287-amino-acid polypeptide reads, in one-letter code: mRNA-capping enzyme regulatory subunit OPG124 (287 aa).

It belongs to the orthopoxvirus mRNA-capping enzyme regulatory subunit family. In terms of assembly, interacts with the catalytic subunit OPG113.

It is found in the virion. Its function is as follows. Regulatory subunit of the mRNA cap enzyme which stabilizes the catalytic subunit and enhances its methyltransferase activity through an allosteric mechanism. Heterodimeric mRNA capping enzyme catalyzes the linkage of a N7-methyl-guanosine moiety to the first transcribed nucleotide (cap 0 structure), whereas the methyltransferase OPG102 is responsible for a second methylation at the 2'-O position of the ribose (cap 1 structure). Also involved in early viral gene transcription termination and intermediate viral gene transcription initiation. Early gene transcription termination requires the termination factor VTF, the DNA-dependent ATPase NPH-I/OPG123 and the RAP94/OPG109 subunit of the viral RNA polymerase, as well as the presence of a specific termination motif. Binds, together with RAP94/OPG109, to the termination motif 5'-UUUUUNU-3' in the nascent early mRNA. The protein is mRNA-capping enzyme regulatory subunit OPG124 (OPG124) of Variola virus (isolate Human/India/Ind3/1967) (VARV).